A 979-amino-acid chain; its full sequence is Peptidyl-glycine alpha-amidating monooxygenase (979 aa).

The N-terminal stretch at 1–24 (MAGRARSRLLLLLGLLALQSSCLA) is a signal peptide. A peptidylglycine alpha-hydroxylating monooxygenase region spans residues 1-497 (MAGRARSRLL…EGPWEPELAG (497 aa)). A propeptide spanning residues 25-34 (FRSPLSVFKR) is cleaved from the precursor. Residues 35 to 869 (FKETTRSFSN…KKLIKDPGSG (835 aa)) are Intragranular-facing. Disulfide bonds link Cys-46-Cys-185, Cys-80-Cys-125, Cys-113-Cys-130, Cys-226-Cys-333, and Cys-292-Cys-314. Residues His-106 and His-107 each coordinate Cu(2+). The Cu(2+) site is built by His-171, His-241, His-243, and Met-313. The interval 498 to 823 (DFHVEEALEW…SRLEVEHRSV (326 aa)) is peptidyl-alpha-hydroxyglycine alpha-amidating lyase. NHL repeat units follow at residues 501–544 (VEEA…NSFD), 570–611 (AEIL…LEPR), 620–665 (LGRS…FSPS), and 673–717 (GEES…FKTD). Val-520 lines the Ca(2+) pocket. Arg-533 contributes to the a protein binding site. Zn(2+) is bound at residue His-585. Leu-587 lines the Ca(2+) pocket. Cysteines 634 and 655 form a disulfide. Residue Tyr-654 coordinates a protein. His-690 provides a ligand contact to Zn(2+). Cysteines 702 and 713 form a disulfide. Position 706 (Arg-706) interacts with a protein. Asn-765 is a glycosylation site (N-linked (GlcNAc...) asparagine). The stretch at 769–812 (GEIIDVFKPVRKHFDMPHDIVASEDGTVYIGDAHTNTVWKFTLT) is one NHL 5 repeat. Residue His-786 coordinates Zn(2+). Residue Asp-787 participates in Ca(2+) binding. A helical membrane pass occupies residues 870 to 893 (VPVVLITTLLVIPVVVLLAIAMFI). At 894-979 (RWKKSRAFGD…APLPTPAPSS (86 aa)) the chain is on the cytoplasmic side. Phosphoserine occurs at positions 924, 925, 935, and 948. The segment at 931 to 948 (NFFASRKGYSRKGFDRVS) is interaction with RASSF9. Residues 943-979 (GFDRVSTEGSDQEKDEDDGSESEEEYSAPLPTPAPSS) are disordered. Thr-949 carries the phosphothreonine modification. Residue Ser-952 is modified to Phosphoserine; by UHMK1. Residues 955–968 (EKDEDDGSESEEEY) show a composition bias toward acidic residues. A Phosphoserine modification is found at Ser-964.

It in the C-terminal section; belongs to the peptidyl-alpha-hydroxyglycine alpha-amidating lyase family. This sequence in the N-terminal section; belongs to the copper type II ascorbate-dependent monooxygenase family. Monomer. Interacts with RASSF9. It depends on Zn(2+) as a cofactor. Requires Cu(2+) as cofactor.

Its subcellular location is the cytoplasmic vesicle. The protein resides in the secretory vesicle membrane. The catalysed reaction is a [peptide]-C-terminal glycine + 2 L-ascorbate + O2 = a [peptide]-C-terminal (2S)-2-hydroxyglycine + 2 monodehydro-L-ascorbate radical + H2O. The enzyme catalyses a [peptide]-C-terminal (2S)-2-hydroxyglycine = a [peptide]-C-terminal amide + glyoxylate. It catalyses the reaction N-dodecanoylglycine + 2 L-ascorbate + O2 = N-dodecanoyl-(2S)-hydroxyglycine + 2 monodehydro-L-ascorbate radical + H2O. It carries out the reaction N-dodecanoyl-(2S)-hydroxyglycine = dodecanamide + glyoxylate. The catalysed reaction is N-(9Z,12Z,15Z)-octadecatrienoylglycine + 2 L-ascorbate + O2 = N-(9Z,12Z,15Z)-octadecatrienoyl-(2S)-hydroxyglycine + 2 monodehydro-L-ascorbate radical + H2O. The enzyme catalyses N-(9Z,12Z,15Z)-octadecatrienoyl-(2S)-hydroxyglycine = (9Z,12Z,15Z)-octadecatrienamide + glyoxylate. It catalyses the reaction N-(9Z-octadecenoyl)glycine + 2 L-ascorbate + O2 = N-(9Z-octadecenoyl)-(2S)-hydroxyglycine + 2 monodehydro-L-ascorbate radical + H2O. It carries out the reaction N-(9Z-octadecenoyl)-(2S)-hydroxyglycine = (9Z)-octadecenamide + glyoxylate. The catalysed reaction is N-tetradecanoylglycine + 2 L-ascorbate + O2 = N-tetradecanoyl-(2S)-hydroxyglycine + 2 monodehydro-L-ascorbate radical + H2O. The enzyme catalyses N-tetradecanoyl-(2S)-hydroxyglycine = tetradecamide + glyoxylate. It catalyses the reaction N-decanoylglycine + 2 L-ascorbate + O2 = N-decanoyl-(2S)-hydroxyglycine + 2 monodehydro-L-ascorbate radical + H2O. It carries out the reaction N-decanoyl-(2S)-hydroxyglycine = decanamide + glyoxylate. The catalysed reaction is N-octanoylglycine + 2 L-ascorbate + O2 = N-octanoyl-(2S)-hydroxyglycine + 2 monodehydro-L-ascorbate radical + H2O. The enzyme catalyses N-octanoyl-(2S)-hydroxyglycine = octanamide + glyoxylate. Its activity is regulated as follows. PAM activity is inhibited by EDTA, phenylglyoxal and diethyl pyrocarbonate. PAL activity is stimulated by cadmium and inhibited by mercury. In terms of biological role, bifunctional enzyme that catalyzes amidation of the C-terminus of proteins. Alpha-amidation is present at the C-terminus of many endocrine hormones and neuropeptides and is required for their activity. C-terminal amidation also takes place in response to protein fragmentation triggered by oxidative stress, promoting degradation of amidated protein fragments by the proteasome. Alpha-amidation involves two sequential reactions, both of which are catalyzed by separate catalytic domains of the enzyme. The first step, catalyzed by peptidyl alpha-hydroxylating monooxygenase (PHM) domain, is the copper-, ascorbate-, and O2- dependent stereospecific hydroxylation (with S stereochemistry) at the alpha-carbon (C-alpha) of the C-terminal glycine of the peptidylglycine substrate. The second step, catalyzed by the peptidylglycine amidoglycolate lyase (PAL) domain, is the zinc-dependent cleavage of the N-C-alpha bond, producing the alpha-amidated peptide and glyoxylate. Similarly, catalyzes the two-step conversion of an N-fatty acylglycine to a primary fatty acid amide and glyoxylate. The chain is Peptidyl-glycine alpha-amidating monooxygenase from Mus musculus (Mouse).